We begin with the raw amino-acid sequence, 65 residues long: UPF0434 protein HSM_0997 (65 aa).

Belongs to the UPF0434 family.

The protein is UPF0434 protein HSM_0997 of Histophilus somni (strain 2336) (Haemophilus somnus).